Here is a 519-residue protein sequence, read N- to C-terminus: Acetylcholine receptor subunit gamma (519 aa).

The N-terminal stretch at 1–22 (MQGGQRPHLLLLLLAVCLGAQS) is a signal peptide. At 23 to 240 (RNQEERLLAD…VVFYLLIQRK (218 aa)) the chain is on the extracellular side. Asparagine 52 and asparagine 163 each carry an N-linked (GlcNAc...) asparagine glycan. Cysteines 150 and 164 form a disulfide. Helical transmembrane passes span 241 to 265 (PLFY…IYFL), 274 to 292 (CTVA…FLVA), and 308 to 329 (YLTF…VLNV). Residues 330–476 (SLRSPHTHSM…WLLVGRVLDR (147 aa)) lie on the Cytoplasmic side of the membrane. A helical membrane pass occupies residues 477-497 (VCFLAMLSLFICGTAGIFLMA).

The protein belongs to the ligand-gated ion channel (TC 1.A.9) family. Acetylcholine receptor (TC 1.A.9.1) subfamily. Gamma/CHRNG sub-subfamily. Pentamer of two alpha chains, and one each of the beta, delta, and gamma (in immature muscle) or epsilon (in mature muscle) chains. As to expression, at least in myotubes of skeletal muscle.

The protein resides in the postsynaptic cell membrane. The protein localises to the cell membrane. It carries out the reaction K(+)(in) = K(+)(out). The enzyme catalyses Na(+)(in) = Na(+)(out). Its function is as follows. After binding acetylcholine, the AChR responds by an extensive change in conformation that affects all subunits and leads to opening of an ion-conducting channel across the plasma membrane. The chain is Acetylcholine receptor subunit gamma (Chrng) from Mus musculus (Mouse).